Reading from the N-terminus, the 485-residue chain is Cytolytic protein enterolobin (485 aa).

Intrachain disulfides connect Cys-34/Cys-98 and Cys-183/Cys-189.

The protein belongs to the aerolysin family. In terms of assembly, oligomerizes as a hexamer. Post-translationally, the N-terminus is blocked.

Its function is as follows. Cytolytic protein with insecticidal activity. Acts as a pro-inflammatory agent. This chain is Cytolytic protein enterolobin, found in Enterolobium contortisiliquum (Pacara earpod tree).